Here is a 302-residue protein sequence, read N- to C-terminus: CRISPR-associated endonuclease Cas1 1 (302 aa).

Mn(2+) contacts are provided by glutamate 159, histidine 219, and glutamate 234.

This sequence belongs to the CRISPR-associated endonuclease Cas1 family. As to quaternary structure, homodimer, forms a heterotetramer with a Cas2 homodimer. Mg(2+) serves as cofactor. Requires Mn(2+) as cofactor.

In terms of biological role, CRISPR (clustered regularly interspaced short palindromic repeat), is an adaptive immune system that provides protection against mobile genetic elements (viruses, transposable elements and conjugative plasmids). CRISPR clusters contain spacers, sequences complementary to antecedent mobile elements, and target invading nucleic acids. CRISPR clusters are transcribed and processed into CRISPR RNA (crRNA). Acts as a dsDNA endonuclease. Involved in the integration of spacer DNA into the CRISPR cassette. In Pyrobaculum aerophilum (strain ATCC 51768 / DSM 7523 / JCM 9630 / CIP 104966 / NBRC 100827 / IM2), this protein is CRISPR-associated endonuclease Cas1 1.